We begin with the raw amino-acid sequence, 253 residues long: Phosphoadenosine 5'-phosphosulfate reductase (253 aa).

C239 functions as the Nucleophile; cysteine thiosulfonate intermediate in the catalytic mechanism.

It belongs to the PAPS reductase family. CysH subfamily.

It localises to the cytoplasm. It carries out the reaction [thioredoxin]-disulfide + sulfite + adenosine 3',5'-bisphosphate + 2 H(+) = [thioredoxin]-dithiol + 3'-phosphoadenylyl sulfate. Its pathway is sulfur metabolism; hydrogen sulfide biosynthesis; sulfite from sulfate: step 3/3. Functionally, catalyzes the formation of sulfite from phosphoadenosine 5'-phosphosulfate (PAPS) using thioredoxin as an electron donor. This chain is Phosphoadenosine 5'-phosphosulfate reductase, found in Aliivibrio fischeri (strain ATCC 700601 / ES114) (Vibrio fischeri).